The primary structure comprises 538 residues: Phosphoenolpyruvate carboxykinase (ATP) (538 aa).

The substrate site is built by arginine 62, tyrosine 203, and lysine 209. Residues lysine 209, histidine 228, and 244–252 (GLSGTGKTT) each bind ATP. Residues lysine 209 and histidine 228 each contribute to the Mn(2+) site. A Mn(2+)-binding site is contributed by aspartate 265. ATP is bound by residues glutamate 293, arginine 329, 445-446 (RI), and threonine 451. Arginine 329 is a substrate binding site.

The protein belongs to the phosphoenolpyruvate carboxykinase (ATP) family. In terms of assembly, monomer. Requires Mn(2+) as cofactor.

It localises to the cytoplasm. The enzyme catalyses oxaloacetate + ATP = phosphoenolpyruvate + ADP + CO2. Its pathway is carbohydrate biosynthesis; gluconeogenesis. Its function is as follows. Involved in the gluconeogenesis. Catalyzes the conversion of oxaloacetate (OAA) to phosphoenolpyruvate (PEP) through direct phosphoryl transfer between the nucleoside triphosphate and OAA. This Haemophilus ducreyi (strain 35000HP / ATCC 700724) protein is Phosphoenolpyruvate carboxykinase (ATP).